The following is a 394-amino-acid chain: MAAYDWIESALATVHKANWYRSVKTMSSPGPTAVLNGQTVINFASNDYLGLAGDSRLAEAAIAAINTYGTGSTGSRLLSGHRMIHEQLERAIATWKQTETAIVYSSGYLANIGTITALVNKRDLILADAYNHASLKNGARLSGATIHEFGHANVTELQTLLETHRSHHRRCLLVTDSVFSMDGDLCPLPELIALAEQYDCMLLIDEAHGTGVLGKTGAGCVEHFGCRDAELIQMGTLSKALGSLGGYVAGSASLIDYLRNRSSSWIYTTGLSPADTAAALAAVEIIREGSELRSQLWQRVTQLKQALTTHLAPEDEHQTMQLLPSESPILCVQMPTPAAVLTASQQLLDQGIFAPAIRPPTVPTSRIRISIMATHQAVQIDQLIVALSEVAQGS.

Substrate is bound at residue Arg-21. 107-108 (GY) is a pyridoxal 5'-phosphate binding site. His-132 serves as a coordination point for substrate. Residues Ser-180, 205-208 (DEAH), and 236-239 (TLSK) contribute to the pyridoxal 5'-phosphate site. Lys-239 carries the post-translational modification N6-(pyridoxal phosphate)lysine. Thr-361 contacts substrate.

It belongs to the class-II pyridoxal-phosphate-dependent aminotransferase family. BioF subfamily. Homodimer. It depends on pyridoxal 5'-phosphate as a cofactor.

The catalysed reaction is 6-carboxyhexanoyl-[ACP] + L-alanine + H(+) = (8S)-8-amino-7-oxononanoate + holo-[ACP] + CO2. It participates in cofactor biosynthesis; biotin biosynthesis. Functionally, catalyzes the decarboxylative condensation of pimeloyl-[acyl-carrier protein] and L-alanine to produce 8-amino-7-oxononanoate (AON), [acyl-carrier protein], and carbon dioxide. The polypeptide is Putative 8-amino-7-oxononanoate synthase (bioF) (Acaryochloris marina (strain MBIC 11017)).